The chain runs to 97 residues: Small integral membrane protein 8 (97 aa).

The tract at residues 1–24 (MSSAPEPPTFKKEPPKEKEFQSPG) is disordered. Over residues 9–20 (TFKKEPPKEKEF) the composition is skewed to basic and acidic residues. A helical membrane pass occupies residues 48-70 (PVMAFGLVTLSLCVAYIGYLHAI).

It belongs to the SMIM8 family.

The protein localises to the membrane. In Homo sapiens (Human), this protein is Small integral membrane protein 8 (SMIM8).